We begin with the raw amino-acid sequence, 36 residues long: Pancreatic polypeptide (36 aa).

Tyr-36 is subject to Tyrosine amide.

Belongs to the NPY family.

The protein localises to the secreted. Hormone secreted by pancreatic cells that acts as a regulator of pancreatic and gastrointestinal functions probably by signaling through the G protein-coupled receptor NPY4R2. This chain is Pancreatic polypeptide (PPY), found in Macaca mulatta (Rhesus macaque).